Consider the following 906-residue polypeptide: Ectonucleotide pyrophosphatase/phosphodiesterase family member 1 (906 aa).

A disordered region spans residues 1–25 (MERDGEQAGQGPRHGPAGNGRELES). The Cytoplasmic segment spans residues 1-58 (MERDGEQAGQGPRHGPAGNGRELESPAAASLLAPMDLGEEPLEKAERARTAKDPNTYK). A Phosphoserine modification is found at Ser25. Positions 27–34 (AAASLLAP) match the Di-leucine motif motif. The chain crosses the membrane as a helical; Signal-anchor for type II membrane protein span at residues 59–79 (VLSLVLSVCVLTTILGCIFGL). The Extracellular portion of the chain corresponds to 80 to 906 (KPSCAKEVKS…THLPIFSQED (827 aa)). SMB domains follow at residues 86 to 126 (EVKS…VEPT) and 127 to 170 (HIWT…QEKK). 10 cysteine pairs are disulfide-bonded: Cys90/Cys104, Cys94/Cys122, Cys102/Cys115, Cys108/Cys114, Cys131/Cys148, Cys136/Cys166, Cys146/Cys159, Cys152/Cys158, Cys177/Cys223, and Cys185/Cys397. Asn161 carries an N-linked (GlcNAc...) asparagine glycan. Positions 173-573 (VEEACETIDA…APNNESHGSL (401 aa)) are phosphodiesterase. Residues Asp200, Thr238, and Asn259 each contribute to the AMP site. Residues Asp200 and Thr238 each coordinate Zn(2+). Thr238 (AMP-threonine intermediate) is an active-site residue. Residues Thr238 and Asn259 each coordinate CMP. The dTMP site is built by Thr238 and Asn259. The GMP site is built by Thr238 and Asn259. Thr238 is subject to Phosphothreonine. Asn267 is a glycosylation site (N-linked (GlcNAc...) asparagine). The GMP site is built by Leu272, Lys277, and Tyr322. Residues Lys277 and Tyr322 each contribute to the AMP site. 2 residues coordinate CMP: Lys277 and Tyr322. Tyr322 lines the dTMP pocket. The N-linked (GlcNAc...) asparagine glycan is linked to Asn323. Asp358 contributes to the AMP binding site. 4 residues coordinate Zn(2+): Asp358, His362, Asp405, and His406. Position 358 (Asp358) interacts with CMP. Asp358 contributes to the dTMP binding site. Asp358 is a binding site for GMP. His362 contacts 2',3'-cGAMP. An AMP-binding site is contributed by His406. His406 contributes to the CMP binding site. His406 is a dTMP binding site. A GMP-binding site is contributed by His406. 6 disulfides stabilise this stretch: Cys413–Cys512, Cys462–Cys849, Cys596–Cys653, Cys607–Cys707, Cys609–Cys692, and Cys819–Cys829. A glycan (N-linked (GlcNAc...) asparagine) is linked at Asn459. Ser514 serves as a coordination point for 2',3'-cGAMP. His517 is an AMP binding site. His517 serves as a coordination point for Zn(2+). His517 contributes to the CMP binding site. A dTMP-binding site is contributed by His517. His517 is a GMP binding site. Asn567 and Asn624 each carry an N-linked (GlcNAc...) asparagine glycan. The linker stretch occupies residues 579–628 (KPIYTPSHPKEESFLSQCPIKSVSSDLGCTCDPSIVPIMDFEKQFNLTTD). The nuclease-like domain stretch occupies residues 635-906 (SMTVPNGRPR…THLPIFSQED (272 aa)). Asp781, Asp783, Asp785, Arg787, and Asp789 together coordinate Ca(2+).

Belongs to the nucleotide pyrophosphatase/phosphodiesterase family. Ectonucleotide pyrophosphatase/phosphodiesterase family member 1: Homodimer. Ectonucleotide pyrophosphatase/phosphodiesterase family member 1: Interacts with INSR; leading to inhibit INSR autophosphorylation and subsequent activation of INSR kinase activity. Ectonucleotide pyrophosphatase/phosphodiesterase family member 1, secreted form: Monomeric. Zn(2+) is required as a cofactor. In terms of processing, the secreted form is produced through cleavage at Lys-85 by intracellular processing.

It localises to the cell membrane. The protein resides in the basolateral cell membrane. It is found in the secreted. It catalyses the reaction Hydrolytically removes 5'-nucleotides successively from the 3'-hydroxy termini of 3'-hydroxy-terminated oligonucleotides.. It carries out the reaction a ribonucleoside 5'-triphosphate + H2O = a ribonucleoside 5'-phosphate + diphosphate + H(+). The enzyme catalyses ATP + H2O = AMP + diphosphate + H(+). The catalysed reaction is UTP + H2O = UMP + diphosphate + H(+). It catalyses the reaction GTP + H2O = GMP + diphosphate + H(+). It carries out the reaction CTP + H2O = CMP + diphosphate + H(+). The enzyme catalyses 2',3'-cGAMP + 2 H2O = GMP + AMP + 2 H(+). The catalysed reaction is P(1),P(4)-bis(5'-adenosyl) tetraphosphate + H2O = AMP + ATP + 2 H(+). It catalyses the reaction 3',5'-cyclic AMP + H2O = AMP + H(+). With respect to regulation, at low concentrations of ATP, a phosphorylated intermediate is formed which inhibits further hydrolysis. In terms of biological role, nucleotide pyrophosphatase that generates diphosphate (PPi) and functions in bone mineralization and soft tissue calcification by regulating pyrophosphate levels. PPi inhibits bone mineralization and soft tissue calcification by binding to nascent hydroxyapatite crystals, thereby preventing further growth of these crystals. Preferentially hydrolyzes ATP, but can also hydrolyze other nucleoside 5' triphosphates such as GTP, CTP and UTP to their corresponding monophosphates with release of pyrophosphate, as well as diadenosine polyphosphates, and also 3',5'-cAMP to AMP. May also be involved in the regulation of the availability of nucleotide sugars in the endoplasmic reticulum and Golgi, and the regulation of purinergic signaling. Inhibits ectopic joint calcification and maintains articular chondrocytes by repressing hedgehog signaling; it is however unclear whether hedgehog inhibition is direct or indirect. Appears to modulate insulin sensitivity. Also involved in melanogenesis. Also able to hydrolyze 2',3'-cGAMP (cyclic GMP-AMP), a second messenger that activates TMEM173/STING and triggers type-I interferon production. 2',3'-cGAMP degradation takes place in the lumen or extracellular space, and not in the cytosol where it is produced; the role of 2',3'-cGAMP hydrolysis is therefore unclear. Not able to hydrolyze the 2',3'-cGAMP linkage isomer 3'-3'-cGAMP. The chain is Ectonucleotide pyrophosphatase/phosphodiesterase family member 1 from Rattus norvegicus (Rat).